Here is a 232-residue protein sequence, read N- to C-terminus: Cobalt transport protein CbiM (232 aa).

6 helical membrane-spanning segments follow: residues 6 to 26, 43 to 63, 84 to 104, 107 to 127, 135 to 155, and 181 to 201; these read GFLPPAHAIAWGVASAPFVVH, LLLGASGAFTFVLSALKLPSV, IMAVLGTITLLFQALLLAHGG, TLGANVFSMAIVGPWAGYGVY, VPLMVTVFFGAFVADLSTYCV, and IFAVTQIPLAVSEGLLTVIVM.

This sequence belongs to the CbiM family. Forms an energy-coupling factor (ECF) transporter complex composed of an ATP-binding protein (A component, CbiO), a transmembrane protein (T component, CbiQ) and 2 possible substrate-capture proteins (S components, CbiM and CbiN) of unknown stoichimetry.

The protein localises to the cell membrane. The protein operates within cofactor biosynthesis; adenosylcobalamin biosynthesis. Functionally, part of the energy-coupling factor (ECF) transporter complex CbiMNOQ involved in cobalt import. The sequence is that of Cobalt transport protein CbiM from Streptomyces coelicolor (strain ATCC BAA-471 / A3(2) / M145).